The sequence spans 192 residues: Xanthine phosphoribosyltransferase (192 aa).

Xanthine is bound by residues L20 and N27. 128 to 132 provides a ligand contact to 5-phospho-alpha-D-ribose 1-diphosphate; it reads ANGQA. A xanthine-binding site is contributed by K156.

Belongs to the purine/pyrimidine phosphoribosyltransferase family. Xpt subfamily. In terms of assembly, homodimer.

It is found in the cytoplasm. It catalyses the reaction XMP + diphosphate = xanthine + 5-phospho-alpha-D-ribose 1-diphosphate. It participates in purine metabolism; XMP biosynthesis via salvage pathway; XMP from xanthine: step 1/1. Its function is as follows. Converts the preformed base xanthine, a product of nucleic acid breakdown, to xanthosine 5'-monophosphate (XMP), so it can be reused for RNA or DNA synthesis. The chain is Xanthine phosphoribosyltransferase from Lacticaseibacillus casei (strain BL23) (Lactobacillus casei).